Here is a 259-residue protein sequence, read N- to C-terminus: Pimeloyl-[acyl-carrier protein] methyl ester esterase (259 aa).

Residues tryptophan 18, 78 to 79 (SL), and 139 to 143 (FLALD) contribute to the substrate site. Catalysis depends on serine 78, which acts as the Nucleophile. Catalysis depends on residues aspartate 203 and histidine 231. Residue histidine 231 participates in substrate binding.

This sequence belongs to the AB hydrolase superfamily. Carboxylesterase BioH family. In terms of assembly, monomer.

The protein localises to the cytoplasm. The enzyme catalyses 6-carboxyhexanoyl-[ACP] methyl ester + H2O = 6-carboxyhexanoyl-[ACP] + methanol + H(+). Its pathway is cofactor biosynthesis; biotin biosynthesis. The physiological role of BioH is to remove the methyl group introduced by BioC when the pimeloyl moiety is complete. It allows to synthesize pimeloyl-ACP via the fatty acid synthetic pathway through the hydrolysis of the ester bonds of pimeloyl-ACP esters. In Stenotrophomonas maltophilia (strain R551-3), this protein is Pimeloyl-[acyl-carrier protein] methyl ester esterase.